A 135-amino-acid polypeptide reads, in one-letter code: Small ribosomal subunit protein uS12 (135 aa).

The tract at residues 1–29 (MPTINQLVRKGREKVEKKSKAPALQGNPQ) is disordered. Asp89 bears the 3-methylthioaspartic acid mark. The interval 106-135 (GVKDRKQSRSKYGAKRPKPGQAAATTGKKK) is disordered. Residues 113-123 (SRSKYGAKRPK) are compositionally biased toward basic residues.

Belongs to the universal ribosomal protein uS12 family. As to quaternary structure, part of the 30S ribosomal subunit. Contacts proteins S8 and S17. May interact with IF1 in the 30S initiation complex.

With S4 and S5 plays an important role in translational accuracy. In terms of biological role, interacts with and stabilizes bases of the 16S rRNA that are involved in tRNA selection in the A site and with the mRNA backbone. Located at the interface of the 30S and 50S subunits, it traverses the body of the 30S subunit contacting proteins on the other side and probably holding the rRNA structure together. The combined cluster of proteins S8, S12 and S17 appears to hold together the shoulder and platform of the 30S subunit. This Sulfurihydrogenibium sp. (strain YO3AOP1) protein is Small ribosomal subunit protein uS12.